The primary structure comprises 328 residues: Malate dehydrogenase (328 aa).

11–17 (GAAGQIG) serves as a coordination point for NAD(+). Substrate-binding residues include Arg-94 and Arg-100. NAD(+)-binding positions include Asn-107, Gln-114, and 131 to 133 (VGN). Substrate contacts are provided by Asn-133 and Arg-164. His-189 serves as the catalytic Proton acceptor.

It belongs to the LDH/MDH superfamily. MDH type 2 family.

It carries out the reaction (S)-malate + NAD(+) = oxaloacetate + NADH + H(+). Its function is as follows. Catalyzes the reversible oxidation of malate to oxaloacetate. This is Malate dehydrogenase from Xanthomonas campestris pv. campestris (strain B100).